We begin with the raw amino-acid sequence, 292 residues long: Glycine--tRNA ligase alpha subunit (292 aa).

Belongs to the class-II aminoacyl-tRNA synthetase family. In terms of assembly, tetramer of two alpha and two beta subunits.

Its subcellular location is the cytoplasm. It carries out the reaction tRNA(Gly) + glycine + ATP = glycyl-tRNA(Gly) + AMP + diphosphate. This is Glycine--tRNA ligase alpha subunit from Synechococcus sp. (strain ATCC 27144 / PCC 6301 / SAUG 1402/1) (Anacystis nidulans).